A 97-amino-acid polypeptide reads, in one-letter code: uncharacterized protein (97 aa).

Ser2 is modified (N-acetylserine).

This is an uncharacterized protein from Mycobacterium tuberculosis (strain ATCC 25618 / H37Rv).